The primary structure comprises 97 residues: Citrate lyase acyl carrier protein (97 aa).

O-(phosphoribosyl dephospho-coenzyme A)serine is present on serine 14.

It belongs to the CitD family. In terms of assembly, oligomer with a subunit composition of (alpha,beta,gamma)6.

It is found in the cytoplasm. Covalent carrier of the coenzyme of citrate lyase. This Lactobacillus acidophilus (strain ATCC 700396 / NCK56 / N2 / NCFM) protein is Citrate lyase acyl carrier protein.